The primary structure comprises 131 residues: Sec-independent protein translocase protein TatB (131 aa).

Residues 2–22 (FDGIGFMELLLIGILGLVVLG) form a helical membrane-spanning segment. Polar residues-rich tracts occupy residues 68-83 (ESQG…QDSI) and 116-131 (AEKS…KPNG). The tract at residues 68–131 (ESQGLKNLSP…TGANSDKPNG (64 aa)) is disordered.

Belongs to the TatB family. As to quaternary structure, the Tat system comprises two distinct complexes: a TatABC complex, containing multiple copies of TatA, TatB and TatC subunits, and a separate TatA complex, containing only TatA subunits. Substrates initially bind to the TatABC complex, which probably triggers association of the separate TatA complex to form the active translocon.

The protein resides in the cell inner membrane. In terms of biological role, part of the twin-arginine translocation (Tat) system that transports large folded proteins containing a characteristic twin-arginine motif in their signal peptide across membranes. Together with TatC, TatB is part of a receptor directly interacting with Tat signal peptides. TatB may form an oligomeric binding site that transiently accommodates folded Tat precursor proteins before their translocation. This chain is Sec-independent protein translocase protein TatB, found in Shewanella pealeana (strain ATCC 700345 / ANG-SQ1).